Reading from the N-terminus, the 195-residue chain is HTH-type transcriptional regulator BetI (195 aa).

The region spanning 8 to 68 (SIRRRQLIDA…ATMRDITSQL (61 aa)) is the HTH tetR-type domain. The H-T-H motif DNA-binding region spans 31 to 50 (TIAQIARRAGVSTGIISHYF).

Its pathway is amine and polyamine biosynthesis; betaine biosynthesis via choline pathway [regulation]. Repressor involved in the biosynthesis of the osmoprotectant glycine betaine. It represses transcription of the choline transporter BetT and the genes of BetAB involved in the synthesis of glycine betaine. The protein is HTH-type transcriptional regulator BetI of Escherichia coli O17:K52:H18 (strain UMN026 / ExPEC).